Reading from the N-terminus, the 349-residue chain is PhoH-like protein (349 aa).

147-154 (GPAGTGKT) contributes to the ATP binding site.

It belongs to the PhoH family.

It localises to the cytoplasm. This Mycobacterium leprae (strain TN) protein is PhoH-like protein.